The chain runs to 322 residues: Protein mono-ADP-ribosyltransferase PARP16 (322 aa).

Residues 1–287 lie on the Cytoplasmic side of the membrane; it reads MQLSNRAAAR…RASSQLSWLS (287 aa). Residues 5-91 form the PARP alpha-helical domain; the sequence is NRAAAREAAS…AWDLVSWILS (87 aa). Residues 94–279 enclose the PARP catalytic domain; the sequence is ILTIHSAKKA…VYSQKQPKRA (186 aa). 3 residues coordinate NAD(+): His-152, Tyr-182, and Tyr-254. Residues 288–308 form a helical membrane-spanning segment; the sequence is SHWFVIMMSLYLLLLLIVSVT. Residues 309-322 are Lumenal-facing; the sequence is NSSVFHHFWNRVKR.

It belongs to the ARTD/PARP family. As to quaternary structure, interacts with KPNB1. Post-translationally, auto-mono-ADP-ribosylated.

It is found in the endoplasmic reticulum membrane. The catalysed reaction is L-aspartyl-[protein] + NAD(+) = 4-O-(ADP-D-ribosyl)-L-aspartyl-[protein] + nicotinamide. It carries out the reaction L-lysyl-[protein] + NAD(+) = N(6)-(ADP-D-ribosyl)-L-lysyl-[protein] + nicotinamide + H(+). It catalyses the reaction L-glutamyl-[protein] + NAD(+) = 5-O-(ADP-D-ribosyl)-L-glutamyl-[protein] + nicotinamide. In absence of activation signal, PARP16 is autoinhibited by the PARP alpha-helical domain (also named HD region), which prevents effective NAD(+)-binding. Activity is highly stimulated by signals, which unfold the PARP alpha-helical domain, relieving autoinhibition. In terms of biological role, intracellular mono-ADP-ribosyltransferase that plays a role in different processes, such as protein translation and unfolded protein response (UPR), through the mono-ADP-ribosylation of proteins involved in those processes. Acts as an inhibitor of protein translation by catalyzing mono-ADP-ribosylation of ribosomal subunits, such as RPL14 and RPS6, thereby inhibiting polysome assembly and mRNA loading. Mono-ADP-ribosylation of ribosomal subunits is promoted by NMNAT2. Involved in the unfolded protein response (UPR) by ADP-ribosylating and activating EIF2AK3 and ERN1, two important UPR effectors. May also mediate mono-ADP-ribosylation of karyopherin KPNB1 a nuclear import factor. May not modify proteins on arginine or cysteine residues compared to other mono-ADP-ribosyltransferases. This is Protein mono-ADP-ribosyltransferase PARP16 from Mus musculus (Mouse).